The sequence spans 445 residues: Probable cytosol aminopeptidase (445 aa).

2 residues coordinate Mn(2+): Lys217 and Asp222. Residue Lys229 is part of the active site. Positions 240, 299, and 301 each coordinate Mn(2+). Arg303 is an active-site residue.

Belongs to the peptidase M17 family. Mn(2+) serves as cofactor.

It localises to the cytoplasm. The catalysed reaction is Release of an N-terminal amino acid, Xaa-|-Yaa-, in which Xaa is preferably Leu, but may be other amino acids including Pro although not Arg or Lys, and Yaa may be Pro. Amino acid amides and methyl esters are also readily hydrolyzed, but rates on arylamides are exceedingly low.. It carries out the reaction Release of an N-terminal amino acid, preferentially leucine, but not glutamic or aspartic acids.. Its function is as follows. Presumably involved in the processing and regular turnover of intracellular proteins. Catalyzes the removal of unsubstituted N-terminal amino acids from various peptides. The polypeptide is Probable cytosol aminopeptidase (pepA) (Mycoplasma pneumoniae (strain ATCC 29342 / M129 / Subtype 1) (Mycoplasmoides pneumoniae)).